The chain runs to 178 residues: Large ribosomal subunit protein uL10 (178 aa).

It belongs to the universal ribosomal protein uL10 family. Part of the ribosomal stalk of the 50S ribosomal subunit. The N-terminus interacts with L11 and the large rRNA to form the base of the stalk. The C-terminus forms an elongated spine to which L12 dimers bind in a sequential fashion forming a multimeric L10(L12)X complex.

Forms part of the ribosomal stalk, playing a central role in the interaction of the ribosome with GTP-bound translation factors. This chain is Large ribosomal subunit protein uL10, found in Albidiferax ferrireducens (strain ATCC BAA-621 / DSM 15236 / T118) (Rhodoferax ferrireducens).